Consider the following 290-residue polypeptide: Shikimate dehydrogenase (NADP(+)) (290 aa).

Shikimate-binding positions include serine 22 to serine 24 and threonine 68. The Proton acceptor role is filled by lysine 72. Positions 93 and 108 each coordinate shikimate. Residues glycine 133–serine 137 and isoleucine 228 contribute to the NADP(+) site. Residue tyrosine 230 participates in shikimate binding. Glycine 251 is a binding site for NADP(+).

The protein belongs to the shikimate dehydrogenase family. Homodimer.

It catalyses the reaction shikimate + NADP(+) = 3-dehydroshikimate + NADPH + H(+). Its pathway is metabolic intermediate biosynthesis; chorismate biosynthesis; chorismate from D-erythrose 4-phosphate and phosphoenolpyruvate: step 4/7. Functionally, involved in the biosynthesis of the chorismate, which leads to the biosynthesis of aromatic amino acids. Catalyzes the reversible NADPH linked reduction of 3-dehydroshikimate (DHSA) to yield shikimate (SA). The polypeptide is Shikimate dehydrogenase (NADP(+)) (Leptospira borgpetersenii serovar Hardjo-bovis (strain JB197)).